Reading from the N-terminus, the 315-residue chain is Olfactory receptor 8J2 (315 aa).

Over 1–24 (MASGNLTWVTEFILVGVSDDPELQ) the chain is Extracellular. An N-linked (GlcNAc...) asparagine glycan is attached at Asn-5. A helical membrane pass occupies residues 25 to 45 (IPLFLVFLVLYLLTVAGNLGI). Over 46–57 (ITLTSVDPQLQT) the chain is Cytoplasmic. The chain crosses the membrane as a helical span at residues 58 to 78 (PMYFFLRHLAIINLCNSTVVA). Residues 79 to 97 (PKMLVNFLVTKKTISYYGC) lie on the Extracellular side of the membrane. Cys-97 and Cys-179 are joined by a disulfide. Residues 98–118 (AAQLGGFLVFIVAEIFTLAAM) traverse the membrane as a helical segment. Residues 119–143 (AYDRYVAIWSPLLYAVVVSPKVCRL) lie on the Cytoplasmic side of the membrane. Residues 144-164 (LVSLTYLQSLITALTVSSCVF) traverse the membrane as a helical segment. Topologically, residues 165–205 (SVSYCSSNIINHFYCDDVPLLALSCSDTYIPETAVFIFSGT) are extracellular. A helical transmembrane segment spans residues 206 to 226 (NLLFSMIVVLISYFNIVITIL). The Cytoplasmic segment spans residues 227-239 (RIRSSEGRQKAFS). A helical transmembrane segment spans residues 240–260 (TCASHMIAVVVFYGTLLFMYL). At 261–271 (QPRSNHSLDTD) the chain is on the extracellular side. The N-linked (GlcNAc...) asparagine glycan is linked to Asn-265. Residues 272-292 (KMASVFYTLVIPVLNPLIYSL) traverse the membrane as a helical segment. The Cytoplasmic portion of the chain corresponds to 293–315 (RNKNVKDALKRFLDNPCRSLKLM).

The protein belongs to the G-protein coupled receptor 1 family.

Its subcellular location is the membrane. Its function is as follows. Odorant receptor. The protein is Olfactory receptor 8J2 (OR8J2) of Homo sapiens (Human).